Here is an 858-residue protein sequence, read N- to C-terminus: Elongation factor 2 (858 aa).

The tr-type G domain maps to 17-362 (ANIRNMSVIA…MITIHLPSPV (346 aa)). 26-33 (AHVDHGKS) contacts GTP. Position 54 is a phosphothreonine (threonine 54). Position 57 is a phosphothreonine; by EEF2K (threonine 57). Threonine 59 is subject to Phosphothreonine. Position 152 is an N6-succinyllysine (lysine 152). Residues 158–161 (NKMD) and 216–218 (SGL) each bind GTP. Lysine 235 carries the post-translational modification N6-acetyllysine. Lysine 239 is modified (N6-acetyllysine; alternate). A Glycyl lysine isopeptide (Lys-Gly) (interchain with G-Cter in SUMO1); alternate cross-link involves residue lysine 239. Position 265 is a phosphotyrosine; by CSK (tyrosine 265). N6-acetyllysine; alternate is present on lysine 272. Lysine 272 carries the N6-succinyllysine; alternate modification. Lysine 275 carries the post-translational modification N6-acetyllysine. Lysine 322 participates in a covalent cross-link: Glycyl lysine isopeptide (Lys-Gly) (interchain with G-Cter in SUMO). Serine 325 bears the Phosphoserine mark. Tyrosine 373 is subject to Phosphotyrosine; by CSK. A Phosphothreonine modification is found at threonine 435. Residues lysine 439 and lysine 445 each carry the N6-acetyllysine modification. Residue serine 502 is modified to Phosphoserine. N6,N6,N6-trimethyllysine; by EEF2KMT is present on lysine 525. Lysine 529 participates in a covalent cross-link: Glycyl lysine isopeptide (Lys-Gly) (interchain with G-Cter in SUMO). The residue at position 572 (lysine 572) is an N6-succinyllysine. Serine 595 carries the phosphoserine; by CDK2 modification. Lysine 619 is subject to N6-acetyllysine. Histidine 715 is modified (diphthamide).

The protein belongs to the TRAFAC class translation factor GTPase superfamily. Classic translation factor GTPase family. EF-G/EF-2 subfamily. In terms of assembly, binds to 80S ribosomes. Actively translating ribosomes show mutually exclusive binding of eIF5a (EIF5A or EIF5A2) and EEF2/eEF2. Interacts with SERBP1; interaction sequesters EEF2/eEF2 at the A-site of the ribosome, thereby blocking the interaction sites of the mRNA-tRNA complex, promoting ribosome stabilization and hibernation. Interacts with HABP4; interaction takes place at the A-site of hibernating ribosomes and promotes ribosome stabilization. Component of the mRNA surveillance SURF complex, at least composed of ERF1, ERF3 (ERF3A or ERF3B), EEF2, UPF1/RENT1, SMG1, SMG8 and SMG9. Interacts with RBPMS2. Phosphorylation by EF-2 kinase completely inactivates EF-2; it requires prior phosphorylation by CDK2 at Ser-595 during mitotic prometaphase. Phosphorylation by CSK promotes SUMOylation, proteolytic cleavage, and nuclear translocation if the C-terminal fragment. In terms of processing, diphthamide is 2-[3-carboxyamido-3-(trimethyl-ammonio)propyl]histidine. Post-translationally, ISGylated. Proteolytically processed at two sites following phosphorylation by CSK. In terms of processing, SUMOylated following phosphorylation by CSK, promotes proteolytic cleavage.

It is found in the cytoplasm. The protein resides in the nucleus. It carries out the reaction GTP + H2O = GDP + phosphate + H(+). Catalyzes the GTP-dependent ribosomal translocation step during translation elongation. During this step, the ribosome changes from the pre-translocational (PRE) to the post-translocational (POST) state as the newly formed A-site-bound peptidyl-tRNA and P-site-bound deacylated tRNA move to the P and E sites, respectively. Catalyzes the coordinated movement of the two tRNA molecules, the mRNA and conformational changes in the ribosome. This chain is Elongation factor 2 (EEF2), found in Callithrix jacchus (White-tufted-ear marmoset).